The chain runs to 447 residues: Alpha-1,3-mannosyl-glycoprotein 2-beta-N-acetylglucosaminyltransferase (447 aa).

Over Met-1–Ser-6 the chain is Cytoplasmic. Residues Ala-7–Trp-29 form a helical; Signal-anchor for type II membrane protein membrane-spanning segment. At Thr-30 to Thr-447 the chain is on the lumenal side. The cysteines at positions 115 and 145 are disulfide-linked. Arg-117, Asp-144, His-190, and Asp-212 together coordinate substrate. Asp-213 is a Mn(2+) binding site. An intrachain disulfide couples Cys-239 to Cys-305. Asp-291 acts as the Proton acceptor in catalysis. Substrate is bound at residue Ser-322.

It belongs to the glycosyltransferase 13 family. Interacts with MGAT4D. Interacts with BRI3. It depends on Mn(2+) as a cofactor.

The protein resides in the golgi apparatus membrane. It is found in the cytoplasm. Its subcellular location is the perinuclear region. The catalysed reaction is N(4)-(alpha-D-Man-(1-&gt;3)-[alpha-D-Man-(1-&gt;3)-[alpha-D-Man-(1-&gt;6)]-alpha-D-Man-(1-&gt;6)]-beta-D-Man-(1-&gt;4)-beta-D-GlcNAc-(1-&gt;4)-beta-D-GlcNAc)-L-asparaginyl-[protein] (N-glucan mannose isomer 5A1,2) + UDP-N-acetyl-alpha-D-glucosamine = N(4)-{beta-D-GlcNAc-(1-&gt;2)-alpha-D-Man-(1-&gt;3)-[alpha-D-Man-(1-&gt;3)-[alpha-D-Man-(1-&gt;6)]-alpha-D-Man-(1-&gt;6)]-beta-D-Man-(1-&gt;4)-beta-D-GlcNAc-(1-&gt;4)-beta-D-GlcNAc}-L-asparaginyl-[protein] + UDP + H(+). The protein operates within protein modification; protein glycosylation. Its function is as follows. Initiates complex N-linked carbohydrate formation. Essential for the conversion of high-mannose to hybrid and complex N-glycans. This Oryctolagus cuniculus (Rabbit) protein is Alpha-1,3-mannosyl-glycoprotein 2-beta-N-acetylglucosaminyltransferase (MGAT1).